Consider the following 250-residue polypeptide: AA9 family lytic polysaccharide monooxygenase F (250 aa).

A signal peptide spans 1-18; sequence MHLKTFSNLLVFVATVAA. His-19 serves as a coordination point for Cu(2+). Residues Asn-24 and Asn-85 are each glycosylated (N-linked (GlcNAc...) asparagine). Disulfide bonds link Cys-70/Cys-199 and Cys-169/Cys-250. His-108 serves as a coordination point for Cu(2+). Asn-146 carries an N-linked (GlcNAc...) asparagine glycan. Residues His-185 and Gln-194 each contribute to the O2 site. Residue Tyr-196 coordinates Cu(2+).

This sequence belongs to the polysaccharide monooxygenase AA9 family. Cu(2+) serves as cofactor.

It is found in the secreted. The enzyme catalyses [(1-&gt;4)-beta-D-glucosyl]n+m + reduced acceptor + O2 = 4-dehydro-beta-D-glucosyl-[(1-&gt;4)-beta-D-glucosyl]n-1 + [(1-&gt;4)-beta-D-glucosyl]m + acceptor + H2O.. In terms of biological role, lytic polysaccharide monooxygenase (LPMO) that depolymerizes crystalline and amorphous polysaccharides via the oxidation of scissile alpha- or beta-(1-4)-glycosidic bonds, yielding C1 and C4 oxidation products. Catalysis by LPMOs requires the reduction of the active-site copper from Cu(II) to Cu(I) by a reducing agent and H(2)O(2) or O(2) as a cosubstrate. The polypeptide is AA9 family lytic polysaccharide monooxygenase F (Botryotinia fuckeliana (strain B05.10) (Noble rot fungus)).